The chain runs to 326 residues: Tumor necrosis factor soluble receptor (326 aa).

A signal peptide spans 1–16 (MFRLTLLLAYVACVYG). TNFR-Cys repeat units lie at residues 27–62 (KCRG…TVCS), 63–104 (PCKN…DRVC), 105–147 (DCSA…VLCT), and 148–186 (KCPR…TSCT). 10 cysteine pairs are disulfide-bonded: Cys-28–Cys-39, Cys-40–Cys-53, Cys-43–Cys-61, Cys-64–Cys-79, Cys-82–Cys-96, Cys-86–Cys-104, Cys-106–Cys-120, Cys-123–Cys-146, Cys-129–Cys-149, and Cys-164–Cys-185. Asn-66 is a glycosylation site (N-linked (GlcNAc...) asparagine; by host). 3 N-linked (GlcNAc...) asparagine; by host glycosylation sites follow: Asn-181, Asn-205, and Asn-238.

In terms of biological role, binds to TNF-alpha and beta. Probably prevents TNF to reach cellular target and thereby deampening the potential antiviral effects of the cytokine. The polypeptide is Tumor necrosis factor soluble receptor (Oryctolagus cuniculus (Rabbit)).